Consider the following 56-residue polypeptide: MPLTDPVKLQIVQQRIFLKKVCRDCGALNSVRATKCRRCHSKNLRPKKKELPAKKG.

Belongs to the eukaryotic ribosomal protein eL40 family.

The protein is Large ribosomal subunit protein eL40 of Sulfurisphaera tokodaii (strain DSM 16993 / JCM 10545 / NBRC 100140 / 7) (Sulfolobus tokodaii).